Consider the following 385-residue polypeptide: 3-hydroxyisobutyryl-CoA hydrolase, mitochondrial (385 aa).

Substrate contacts are provided by Glu-120, Gly-145, Glu-168, and Asp-176.

It belongs to the enoyl-CoA hydratase/isomerase family.

The protein localises to the mitochondrion. The enzyme catalyses 3-hydroxy-2-methylpropanoyl-CoA + H2O = 3-hydroxy-2-methylpropanoate + CoA + H(+). Its pathway is amino-acid degradation; L-valine degradation. Hydrolyzes 3-hydroxyisobutyryl-CoA (HIBYL-CoA), a saline catabolite. Has high activity toward isobutyryl-CoA. Could be an isobutyryl-CoA dehydrogenase that functions in valine catabolism. Also hydrolyzes 3-hydroxypropanoyl-CoA. This chain is 3-hydroxyisobutyryl-CoA hydrolase, mitochondrial (hibch), found in Xenopus tropicalis (Western clawed frog).